The sequence spans 496 residues: ATP synthase subunit beta, chloroplastic (496 aa).

170–177 (GGAGVGKT) lines the ATP pocket.

This sequence belongs to the ATPase alpha/beta chains family. In terms of assembly, F-type ATPases have 2 components, CF(1) - the catalytic core - and CF(0) - the membrane proton channel. CF(1) has five subunits: alpha(3), beta(3), gamma(1), delta(1), epsilon(1). CF(0) has four main subunits: a(1), b(1), b'(1) and c(9-12).

The protein resides in the plastid. It localises to the chloroplast thylakoid membrane. The catalysed reaction is ATP + H2O + 4 H(+)(in) = ADP + phosphate + 5 H(+)(out). Produces ATP from ADP in the presence of a proton gradient across the membrane. The catalytic sites are hosted primarily by the beta subunits. This is ATP synthase subunit beta, chloroplastic from Dioscorea elephantipes (Elephant's foot yam).